The following is a 271-amino-acid chain: Pyrroline-5-carboxylate reductase (271 aa).

Belongs to the pyrroline-5-carboxylate reductase family.

Its subcellular location is the cytoplasm. The catalysed reaction is L-proline + NADP(+) = (S)-1-pyrroline-5-carboxylate + NADPH + 2 H(+). It catalyses the reaction L-proline + NAD(+) = (S)-1-pyrroline-5-carboxylate + NADH + 2 H(+). Its pathway is amino-acid biosynthesis; L-proline biosynthesis; L-proline from L-glutamate 5-semialdehyde: step 1/1. Its function is as follows. Catalyzes the reduction of 1-pyrroline-5-carboxylate (PCA) to L-proline. This is Pyrroline-5-carboxylate reductase from Staphylococcus aureus (strain COL).